The sequence spans 187 residues: MTSNGEGGEVVAKRRRKGIKELVQVALRGGCLAASATAMAVMLTATEEGVADIYGFKLTLSSNWSFSPSYQYVVGACAGTVLYSLLQLCLGVYRLVTGSPITPSRFQAWLCFTSDQLFCYLMMSAGSAGSGVTNLNKTGIRHTPLPDFCKTLSSFCNHVALSLLLVFLSFIFLASSSFFTVLVLSTP.

At 1–24 (MTSNGEGGEVVAKRRRKGIKELVQ) the chain is on the cytoplasmic side. A helical transmembrane segment spans residues 25-45 (VALRGGCLAASATAMAVMLTA). Residues 46 to 71 (TEEGVADIYGFKLTLSSNWSFSPSYQ) lie on the Extracellular side of the membrane. A glycan (N-linked (GlcNAc...) asparagine) is linked at N63. A helical transmembrane segment spans residues 72–92 (YVVGACAGTVLYSLLQLCLGV). At 93–107 (YRLVTGSPITPSRFQ) the chain is on the cytoplasmic side. Residues 108-128 (AWLCFTSDQLFCYLMMSAGSA) traverse the membrane as a helical segment. Topologically, residues 129 to 162 (GSGVTNLNKTGIRHTPLPDFCKTLSSFCNHVALS) are extracellular. N136 is a glycosylation site (N-linked (GlcNAc...) asparagine). The chain crosses the membrane as a helical span at residues 163 to 183 (LLLVFLSFIFLASSSFFTVLV). The Cytoplasmic portion of the chain corresponds to 184–187 (LSTP).

Belongs to the Casparian strip membrane proteins (CASP) family. Homodimer and heterodimers.

It localises to the cell membrane. The polypeptide is CASP-like protein 3A2 (Arabidopsis thaliana (Mouse-ear cress)).